Consider the following 357-residue polypeptide: Protein phosphatase 1 regulatory subunit 42 (357 aa).

LRR repeat units lie at residues 29–50 (KITH…SLCR), 51–72 (NLSV…NYTT), 73–94 (NLTH…SSLK), 95–116 (KLEK…EGLE), 117–138 (ELRE…LFDP), 147–168 (SLST…EILE), and 169–190 (NLNH…ELLL). An LRRCT domain is found at 204–242 (NPVCLKPKYRDKLILTSKSLEFLDGKEIKDMERQFLMNW). Positions 329-357 (ESSLTKNDIHEPHLLQNPKVKENLSEKKE) are disordered. Residues 335 to 357 (NDIHEPHLLQNPKVKENLSEKKE) show a composition bias toward basic and acidic residues.

As to quaternary structure, interacts with PPP1CC isoform gamma-2; the interaction is direct. Interacts with actin, dynein, KIF5B, KIFC1 and tubulin. Associates with microtubules. In terms of processing, phosphorylated; during the first round of spermatogenesis with a marginal increase at 21 days after birth. In terms of tissue distribution, testis-specific. Expressed in spermatids (at protein level). Testis-specific.

It is found in the cytoplasm. The protein localises to the cytoskeleton. The protein resides in the microtubule organizing center. Its subcellular location is the centrosome. Functionally, regulates phosphatase activity of protein phosphatase 1 (PP1) complexes in the testis. The chain is Protein phosphatase 1 regulatory subunit 42 (Ppp1r42) from Mus musculus (Mouse).